Here is a 657-residue protein sequence, read N- to C-terminus: Translation factor GUF1, mitochondrial (657 aa).

A mitochondrion-targeting transit peptide spans 1 to 39 (MRGCLQSVKWLTSALRPSQSLASSTRYPRRLLSTSAPRN). Residues 59 to 239 (ERFRNFCIVA…TVIEQIPAPV (181 aa)) form the tr-type G domain. GTP contacts are provided by residues 68-75 (AHVDHGKS), 132-136 (DTPGH), and 186-189 (NKVD).

The protein belongs to the TRAFAC class translation factor GTPase superfamily. Classic translation factor GTPase family. LepA subfamily.

Its subcellular location is the mitochondrion inner membrane. It carries out the reaction GTP + H2O = GDP + phosphate + H(+). Its function is as follows. Promotes mitochondrial protein synthesis. May act as a fidelity factor of the translation reaction, by catalyzing a one-codon backward translocation of tRNAs on improperly translocated ribosomes. Binds to mitochondrial ribosomes in a GTP-dependent manner. This chain is Translation factor GUF1, mitochondrial, found in Ajellomyces capsulatus (strain G186AR / H82 / ATCC MYA-2454 / RMSCC 2432) (Darling's disease fungus).